The sequence spans 471 residues: Coagulation factor IX (471 aa).

The first 19 residues, 1 to 19 (MAKIPLILSFCLLEAFLGA), serve as a signal peptide directing secretion. Positions 20–39 (ESTVFIENKEASTVLSRTRR) are excised as a propeptide. Residues 40–85 (GNSNRLEELIPGNLERECIEEKCSFEEAREVFENTEKTMEFWKIYI) enclose the Gla domain. Ca(2+) contacts are provided by Asn-41, Glu-46, Glu-47, Glu-54, Glu-56, Glu-59, Glu-60, Glu-65, Glu-66, and Glu-69. 12 positions are modified to 4-carboxyglutamate: Glu-46, Glu-47, Glu-54, Glu-56, Glu-59, Glu-60, Glu-65, Glu-66, Glu-69, Glu-72, Glu-75, and Glu-79. Glu-54 is a Mg(2+) binding site. Cys-57 and Cys-62 are disulfide-bonded. Glu-59 contributes to the Mg(2+) binding site. Glu-65 is a binding site for Mg(2+). Glu-69 serves as a coordination point for Mg(2+). Residues Glu-75, Glu-79, Asp-86, Gly-87, and Gln-89 each contribute to the Ca(2+) site. 2 residues coordinate Mg(2+): Glu-75 and Glu-79. The region spanning 86–122 (DGDQCNSNPCKNGAVCKDGVSSYECMCPPGYGGRNCE) is the EGF-like 1; calcium-binding domain. 10 disulfides stabilise this stretch: Cys-90–Cys-101, Cys-95–Cys-110, Cys-112–Cys-121, Cys-127–Cys-138, Cys-134–Cys-148, Cys-150–Cys-163, Cys-171–Cys-345, Cys-262–Cys-278, Cys-392–Cys-406, and Cys-417–Cys-445. O-linked (Glc...) serine glycosylation occurs at Ser-92. Asp-103 contributes to the Ca(2+) binding site. Asp-103 bears the (3R)-3-hydroxyaspartate mark. Ser-107 bears the Phosphoserine mark. Residues 123 to 164 (IDSTCATKNGGCEHFCRHDTPQKAVCSCASGYKLHEDGKSCK) form the EGF-like 2 domain. Positions 186–235 (TENTIERWNITAHDEGDAHDEALDITEPPPPPTTSAAPAKIVPITKNDTR) are cleaved as a propeptide — activation peptide. The Peptidase S1 domain maps to 236–469 (VVGGYDSVKG…YVKWIRETTR (234 aa)). Catalysis depends on His-277, which acts as the Charge relay system. 4 residues coordinate Ca(2+): Glu-291, Asn-293, Glu-296, and Glu-301. The active-site Charge relay system is the Asp-325. Ser-421 functions as the Charge relay system in the catalytic mechanism.

Belongs to the peptidase S1 family. Heterodimer of a light chain and a heavy chain; disulfide-linked. In terms of processing, activated by factor XIa, which excises the activation peptide. The propeptide can also be removed by snake venom protease. Activated by coagulation factor VIIa-tissue factor (F7-F3) complex in calcium-dependent manner. The iron and 2-oxoglutarate dependent 3-hydroxylation of aspartate and asparagine is (R) stereospecific within EGF domains.

The protein localises to the secreted. It catalyses the reaction Selective cleavage of Arg-|-Ile bond in factor X to form factor Xa.. In terms of biological role, factor IX is a vitamin K-dependent plasma protein that participates in the intrinsic pathway of blood coagulation by converting factor X to its active form in the presence of Ca(2+) ions, phospholipids, and factor VIIIa. The protein is Coagulation factor IX (F9) of Gallus gallus (Chicken).